We begin with the raw amino-acid sequence, 714 residues long: Polyribonucleotide nucleotidyltransferase (714 aa).

D489 and D495 together coordinate Mg(2+). The KH domain occupies 556–615 (PKIDTIKIDVDKIKVVIGKGGETIDKIIAETGVKIDIDEEGNVSIYSSDQDAINRAKEII). Positions 625–693 (GEVYHAKVVR…DKGRIDASMK (69 aa)) constitute an S1 motif domain. The interval 691 to 714 (SMKALVPRPPKPEKSEAKKEGKHD) is disordered. Positions 700 to 714 (PKPEKSEAKKEGKHD) are enriched in basic and acidic residues.

The protein belongs to the polyribonucleotide nucleotidyltransferase family. The cofactor is Mg(2+).

The protein resides in the cytoplasm. It carries out the reaction RNA(n+1) + phosphate = RNA(n) + a ribonucleoside 5'-diphosphate. Its function is as follows. Involved in mRNA degradation. Catalyzes the phosphorolysis of single-stranded polyribonucleotides processively in the 3'- to 5'-direction. This Streptococcus equi subsp. zooepidemicus (strain H70) protein is Polyribonucleotide nucleotidyltransferase.